Here is a 308-residue protein sequence, read N- to C-terminus: Pantothenate kinase (308 aa).

ATP is bound at residue 91 to 98; it reads GSVAVGKS.

Belongs to the prokaryotic pantothenate kinase family.

Its subcellular location is the cytoplasm. It catalyses the reaction (R)-pantothenate + ATP = (R)-4'-phosphopantothenate + ADP + H(+). It participates in cofactor biosynthesis; coenzyme A biosynthesis; CoA from (R)-pantothenate: step 1/5. This Lacticaseibacillus paracasei (strain ATCC 334 / BCRC 17002 / CCUG 31169 / CIP 107868 / KCTC 3260 / NRRL B-441) (Lactobacillus paracasei) protein is Pantothenate kinase.